The chain runs to 605 residues: MPSLKDWVVAGLVPMTIASSTSRLPSNCTNGPSSRRCWQDGFDIWSDYTDPKVAPPGKLVEYDLTVTQVTISPDGYERLGTVFNGQYPGPLIEADWGDTLRITVHNNLTNGNGTAVHWHGIRLFETNWIDGVPGVTQCPIPPGESQVYEFRATQYGTSWYHSHFSLQYSNGLYGPLVIHGPSSSDWDVDLGPWTLTDWYHEDAFTLNWISLAGQLAPIPVSTLLNGKGTYDCDPGLDPACTGKQEYFETTFQQGTKYKMAIVNTATLLTYTFWIDGHNFTVIEADFVPVEPYSTNVLNVGMGQRYEIVVEANADRTQGSSFWIHAHYCDIPDVIPNNKVGIIRYDESDTSEPATPPLSEQHRDFGCSDPSLGDLVPVVKKTVGPRVNQIGPHDYLTIGEQGKIPTPWEKDPRVHLWTIKNTAMYVDWQTPSLEKLTADHDEEFPPETVPVTLDFDTGEWVYFLLTSNYSLEDVVTPRNLTPSVHPIHLHGHDFAILAQGKGPFTPDIAPQLDNPPRRDVVDVDIGGYAWIAFEVDNPGAWLLHCHLQYHASEGMALQYIEQPSKIKPLIENAGVLNDFGNRCASWKRYYNAVDIPNDRPQDDSGI.

Positions 1–18 (MPSLKDWVVAGLVPMTIA) are cleaved as a signal peptide. N-linked (GlcNAc...) asparagine glycans are attached at residues N27, N107, and N112. 3 consecutive Plastocyanin-like domains span residues 65-183 (TVTQ…GPSS), 189-347 (DLGP…YDES), and 424-567 (YVDW…KIKP). Residues H117, H119, H161, and H163 each contribute to the Cu cation site. N278 and N467 each carry an N-linked (GlcNAc...) asparagine glycan. Cu cation contacts are provided by H484, H487, H489, H543, C544, H545, and H549.

Belongs to the multicopper oxidase family. Cu cation serves as cofactor.

The enzyme catalyses 2 dihydrogeodin + O2 + 2 H(+) = 2 (+)-geodin + 2 H2O. The protein operates within secondary metabolite biosynthesis. Functionally, dihydrogeodin oxidase; part of the gene cluster that mediates the biosynthesis of geodin, an intermediate in the biosynthesis of other natural products. The pathway begins with the synthesis of atrochrysone thioester by the polyketide synthase (PKS) gedC. The atrochrysone carboxyl ACP thioesterase gedB then breaks the thioester bond and releases the atrochrysone carboxylic acid from gedC. The atrochrysone carboxylic acid is then converted to atrochrysone which is further transformed into emodinanthrone. The next step is performed by the emodinanthrone oxygenase gedH that catalyzes the oxidation of emodinanthrone to emodin. Emodin O-methyltransferase encoded probably by gedA then catalyzes methylation of the 8-hydroxy group of emodin to form questin. Ring cleavage of questin by questin oxidase gedK leads to desmethylsulochrin via several intermediates including questin epoxide. Another methylation step probably catalyzed by methyltransferase gedG leads to the formation of sulochrin which is further converted to dihydrogeodin by the sulochrin halogenase gedL. Finally, the dihydrogeodin oxidase gedJ catalyzes the stereospecific phenol oxidative coupling reaction converting dihydrogeodin to geodin. This is Dihydrogeodin oxidase from Aspergillus terreus (strain NIH 2624 / FGSC A1156).